A 214-amino-acid polypeptide reads, in one-letter code: tRNA (guanine-N(7)-)-methyltransferase (214 aa).

Residues glutamate 43, glutamate 68, aspartate 95, and aspartate 117 each coordinate S-adenosyl-L-methionine. The active site involves aspartate 117. Residues lysine 121, aspartate 153, and 190 to 193 contribute to the substrate site; that span reads TEYE.

The protein belongs to the class I-like SAM-binding methyltransferase superfamily. TrmB family.

It carries out the reaction guanosine(46) in tRNA + S-adenosyl-L-methionine = N(7)-methylguanosine(46) in tRNA + S-adenosyl-L-homocysteine. It functions in the pathway tRNA modification; N(7)-methylguanine-tRNA biosynthesis. In terms of biological role, catalyzes the formation of N(7)-methylguanine at position 46 (m7G46) in tRNA. The chain is tRNA (guanine-N(7)-)-methyltransferase from Staphylococcus aureus (strain Mu3 / ATCC 700698).